A 699-amino-acid chain; its full sequence is Elongation factor G (699 aa).

The tr-type G domain occupies 8–283 (EHIRNIGICA…AVVDFLPSPI (276 aa)). GTP is bound by residues 17 to 24 (AHIDAGKT), 81 to 85 (DTPGH), and 135 to 138 (NKMD).

It belongs to the TRAFAC class translation factor GTPase superfamily. Classic translation factor GTPase family. EF-G/EF-2 subfamily.

Its subcellular location is the cytoplasm. Catalyzes the GTP-dependent ribosomal translocation step during translation elongation. During this step, the ribosome changes from the pre-translocational (PRE) to the post-translocational (POST) state as the newly formed A-site-bound peptidyl-tRNA and P-site-bound deacylated tRNA move to the P and E sites, respectively. Catalyzes the coordinated movement of the two tRNA molecules, the mRNA and conformational changes in the ribosome. This Rickettsia parkeri protein is Elongation factor G.